Reading from the N-terminus, the 1007-residue chain is Tolloid-like protein 1 (1007 aa).

The first 25 residues, 1–25, serve as a signal peptide directing secretion; the sequence is MNMPSWLIFLLTGWTFCGNFFACGG. The propeptide occupies 26 to 142; that stretch reads LDYDYPNYEN…GKSKKIRIPR (117 aa). The segment at 115–139 is disordered; it reads SGQENTTANSQKVDNNQSGKSKKIR. Positions 116–133 are enriched in polar residues; the sequence is GQENTTANSQKVDNNQSG. Positions 143–342 constitute a Peptidase M12A domain; sequence AATSRTERIW…AQARKLYRCP (200 aa). An N-linked (GlcNAc...) asparagine glycan is attached at asparagine 164. Disulfide bonds link cysteine 185/cysteine 341, cysteine 205/cysteine 227, cysteine 207/cysteine 208, and cysteine 344/cysteine 370. Position 235 (histidine 235) interacts with Zn(2+). Glutamate 236 is a catalytic residue. Zn(2+) is bound by residues histidine 239 and histidine 245. 2 CUB domains span residues 344–456 and 457–569; these read CGET…YEAI and CGGE…FLKE. N-linked (GlcNAc...) asparagine glycans are attached at residues asparagine 354 and asparagine 385. 15 disulfide bridges follow: cysteine 397–cysteine 419, cysteine 457–cysteine 483, cysteine 510–cysteine 532, cysteine 573–cysteine 585, cysteine 581–cysteine 594, cysteine 596–cysteine 609, cysteine 613–cysteine 639, cysteine 666–cysteine 688, cysteine 729–cysteine 740, cysteine 736–cysteine 749, cysteine 751–cysteine 764, cysteine 769–cysteine 795, cysteine 822–cysteine 844, cysteine 882–cysteine 912, and cysteine 939–cysteine 961. In terms of domain architecture, EGF-like 1; calcium-binding spans 569-610; the sequence is EEDECARPDNGGCEQRCVNTLGSYKCSCDPGYELAPDKKSCE. The CUB 3 domain maps to 613–725; the sequence is CGGLLTKLNG…KGFRAHFFSD (113 aa). An N-linked (GlcNAc...) asparagine glycan is attached at asparagine 621. The region spanning 725–765 is the EGF-like 2; calcium-binding domain; it reads DKDECSKDNGGCQHECINTIGSYVCQCRNGFVLHDNKHDCK. CUB domains follow at residues 769–881 and 882–998; these read CEHR…HSTE and CGGR…YRSV.

Requires Zn(2+) as cofactor.

It localises to the secreted. Functionally, protease which processes procollagen C-propeptides, such as chordin. Required for the embryonic development. Predominant protease, which in the development, influences dorsal-ventral patterning and skeletogenesis. This Xenopus laevis (African clawed frog) protein is Tolloid-like protein 1 (tll1).